We begin with the raw amino-acid sequence, 44 residues long: Photosystem I reaction center subunit IX (44 aa).

Residues 7 to 27 (YLSTAPVLAILCVSFLAALLI) traverse the membrane as a helical segment.

This sequence belongs to the PsaJ family.

It is found in the plastid. It localises to the chloroplast thylakoid membrane. May help in the organization of the PsaE and PsaF subunits. The sequence is that of Photosystem I reaction center subunit IX from Pinus thunbergii (Japanese black pine).